We begin with the raw amino-acid sequence, 111 residues long: Disintegrin Eo1 subunit 1 (111 aa).

An N-terminal signal peptide occupies residues 1–20; that stretch reads MIQVLLVIICLAVFPYQGSS. A propeptide spanning residues 21-46 is cleaved from the precursor; that stretch reads IILESGNVNDFELVYPKKVTVLPTGA. One can recognise a Disintegrin domain in the interval 26-111; it reads GNVNDFELVY…SDCPRNPWKD (86 aa). Cystine bridges form between cysteine 53-cysteine 76, cysteine 67-cysteine 73, cysteine 72-cysteine 97, and cysteine 85-cysteine 104. A Cell attachment site; atypical (WGD) motif is present at residues 89-91; that stretch reads WGD. The propeptide occupies 110–111; it reads KD.

Belongs to the disintegrin family. Dimeric disintegrin subfamily. In terms of assembly, heterodimer; disulfide-linked. Expressed by the venom gland.

It localises to the secreted. Its function is as follows. Poor inhibitor of platelet aggregation. The disintegrin inhibits the adhesion of cells expressing the RGD-dependent integrin alpha-5/beta-1 (ITGA5/ITGB1) to immobilized fibronectin. Inhibition on alpha-IIb/beta-3 (ITGA2B/ITGB3) is low. This Echis ocellatus (Ocellated saw-scaled viper) protein is Disintegrin Eo1 subunit 1.